Reading from the N-terminus, the 634-residue chain is ATP-dependent clpX-like chaperone, mitochondrial (634 aa).

The transit peptide at 1-56 directs the protein to the mitochondrion; sequence MSSCGACTCGAAAARLLTTSLTSAQRGISCGRIHVPVLGRLGTTLDAQALRRAPLR. Positions 69–102 are disordered; it reads DGANKDGSGDGNKKSVTEGSSKKSGSGNSGKGGN. A compositionally biased stretch (basic and acidic residues) spans 70–84; sequence GANKDGSGDGNKKSV. The segment covering 85 to 94 has biased composition (low complexity); sequence TEGSSKKSGS. One can recognise a ClpX-type ZB domain in the interval 94–147; the sequence is SGNSGKGGNQLRCPKCGDLCTHVETFVSSTRFVKCEKCHHFFVVLSEADSKKSI. Zn(2+) is bound by residues Cys-106, Cys-109, Cys-128, and Cys-131. 295-302 provides a ligand contact to ATP; sequence PTGSGKTL. An N6-acetyllysine modification is found at Lys-438. Over residues 599-611 the composition is skewed to basic and acidic residues; that stretch reads KEPGYIRAPSKES. The disordered stretch occupies residues 599-634; sequence KEPGYIRAPSKESSEEEYDSGVEEDGWPRQADAANS. A compositionally biased stretch (acidic residues) spans 612–623; the sequence is SEEEYDSGVEED. Ser-618 carries the post-translational modification Phosphoserine.

Belongs to the ClpX chaperone family. Homohexamer that forms a ring structure; this hexamerization requires ATP binding. Component of the ClpXP complex formed by the assembly of two CLPP heptameric rings with two CLPX hexameric rings, giving rise to a symmetrical structure with two central CLPP rings flanked by a CLPX ring at either end of the complex. Interacts with TFAM. Detected in liver (at protein level).

The protein localises to the mitochondrion. It is found in the mitochondrion matrix. It localises to the mitochondrion nucleoid. It catalyses the reaction ATP + H2O = ADP + phosphate + H(+). Functionally, ATP-dependent chaperone that functions as an unfoldase. As part of the ClpXP protease complex, it recognizes specific protein substrates, unfolds them using energy derived from ATP hydrolysis, and then translocates them to the proteolytic subunit (CLPP) of the ClpXP complex for degradation. Thanks to its chaperone activity, it also functions in the incorporation of the pyridoxal phosphate cofactor into 5-aminolevulinate synthase, thereby activating 5-aminolevulinate (ALA) synthesis, the first step in heme biosynthesis. This chaperone is also involved in the control of mtDNA nucleoid distribution, by regulating mitochondrial transcription factor A (TFAM) activity. In Mus musculus (Mouse), this protein is ATP-dependent clpX-like chaperone, mitochondrial.